The following is a 90-amino-acid chain: Small ribosomal subunit protein bS18 (90 aa).

It belongs to the bacterial ribosomal protein bS18 family. In terms of assembly, part of the 30S ribosomal subunit. Forms a tight heterodimer with protein bS6.

In terms of biological role, binds as a heterodimer with protein bS6 to the central domain of the 16S rRNA, where it helps stabilize the platform of the 30S subunit. The chain is Small ribosomal subunit protein bS18 from Porphyromonas gingivalis (strain ATCC 33277 / DSM 20709 / CIP 103683 / JCM 12257 / NCTC 11834 / 2561).